The chain runs to 131 residues: Small ribosomal subunit protein bS6 (131 aa).

The tract at residues 98–131 is disordered; that stretch reads EASPMVKAKDERRERRDDFANETADDAEAGDSEE. Residues 104–116 show a composition bias toward basic and acidic residues; it reads KAKDERRERRDDF. A compositionally biased stretch (acidic residues) spans 120–131; sequence TADDAEAGDSEE.

Belongs to the bacterial ribosomal protein bS6 family.

In terms of biological role, binds together with bS18 to 16S ribosomal RNA. In Cronobacter sakazakii (strain ATCC BAA-894) (Enterobacter sakazakii), this protein is Small ribosomal subunit protein bS6.